A 516-amino-acid chain; its full sequence is Probable rhamnogalacturonase B (516 aa).

The signal sequence occupies residues 1 to 21 (MRLHAFTLLSLLGLVPSFAAA). Cysteine 42 and cysteine 68 form a disulfide bridge. Residue asparagine 145 is glycosylated (N-linked (GlcNAc...) asparagine). Aspartate 219 (proton donor) is an active-site residue. Cysteine 221 and cysteine 238 form a disulfide bridge. A glycan (N-linked (GlcNAc...) asparagine) is linked at asparagine 239. Histidine 294 is an active-site residue. A glycan (N-linked (GlcNAc...) asparagine) is linked at asparagine 321. 2 disulfides stabilise this stretch: cysteine 344-cysteine 350 and cysteine 372-cysteine 381. Residues 462-516 (ETPAAASRSEQVVQGASQETSQPAPESAGPVRSVPTGGNRPSRHRHGHHHFWIAA) are disordered. The segment covering 469-485 (RSEQVVQGASQETSQPA) has biased composition (polar residues). Positions 502 to 516 (PSRHRHGHHHFWIAA) are enriched in basic residues.

The protein belongs to the glycosyl hydrolase 28 family.

It localises to the secreted. It catalyses the reaction Endohydrolysis of alpha-D-GalA-(1-&gt;2)-alpha-L-Rha glycosidic bond in the rhamnogalacturonan I backbone with initial inversion of anomeric configuration releasing oligosaccharides with beta-D-GalA at the reducing end.. Functionally, pectinolytic enzymes consist of four classes of enzymes: pectine lyase, polygalacturonase, pectin methylesterase and rhamnogalacturonase. Hydrolyzes alpha-D-galacturonopyranosyl-(1,2)-alpha-L-rhamnopyranosyl linkages in the backbone of the hairy regions of pectins. The chain is Probable rhamnogalacturonase B (rhgB) from Neosartorya fischeri (strain ATCC 1020 / DSM 3700 / CBS 544.65 / FGSC A1164 / JCM 1740 / NRRL 181 / WB 181) (Aspergillus fischerianus).